A 273-amino-acid polypeptide reads, in one-letter code: Putative pyruvate, phosphate dikinase regulatory protein (273 aa).

149–156 (GPSRTSKT) contributes to the ADP binding site.

Belongs to the pyruvate, phosphate/water dikinase regulatory protein family. PDRP subfamily.

It catalyses the reaction N(tele)-phospho-L-histidyl/L-threonyl-[pyruvate, phosphate dikinase] + ADP = N(tele)-phospho-L-histidyl/O-phospho-L-threonyl-[pyruvate, phosphate dikinase] + AMP + H(+). It carries out the reaction N(tele)-phospho-L-histidyl/O-phospho-L-threonyl-[pyruvate, phosphate dikinase] + phosphate + H(+) = N(tele)-phospho-L-histidyl/L-threonyl-[pyruvate, phosphate dikinase] + diphosphate. Bifunctional serine/threonine kinase and phosphorylase involved in the regulation of the pyruvate, phosphate dikinase (PPDK) by catalyzing its phosphorylation/dephosphorylation. The polypeptide is Putative pyruvate, phosphate dikinase regulatory protein (Rickettsia canadensis (strain McKiel)).